The primary structure comprises 431 residues: Adenosylhomocysteinase (431 aa).

Substrate contacts are provided by threonine 56, aspartate 131, and glutamate 156. Residue 157 to 159 (TTT) coordinates NAD(+). 2 residues coordinate substrate: lysine 186 and aspartate 190. Residues asparagine 191, 222 to 227 (GDVGKG), glutamate 243, 299 to 301 (IGH), and asparagine 345 contribute to the NAD(+) site.

Belongs to the adenosylhomocysteinase family. As to quaternary structure, homotetramer. NAD(+) serves as cofactor.

The catalysed reaction is S-adenosyl-L-homocysteine + H2O = L-homocysteine + adenosine. It functions in the pathway amino-acid biosynthesis; L-homocysteine biosynthesis; L-homocysteine from S-adenosyl-L-homocysteine: step 1/1. Functionally, adenosylhomocysteine is a competitive inhibitor of S-adenosyl-L-methionine-dependent methyl transferase reactions; therefore adenosylhomocysteinase may play a key role in the control of methylations via regulation of the intracellular concentration of adenosylhomocysteine. The sequence is that of Adenosylhomocysteinase (sahA) from Dictyostelium discoideum (Social amoeba).